The sequence spans 152 residues: Nucleoside diphosphate kinase A (152 aa).

ATP is bound by residues K12, F60, R88, and T94. Residue K100 forms a Glycyl lysine isopeptide (Lys-Gly) (interchain with G-Cter in ubiquitin) linkage. ATP contacts are provided by R105 and N115. H118 acts as the Pros-phosphohistidine intermediate in catalysis. Residues S120, S122, and S125 each carry the phosphoserine modification.

Belongs to the NDK family. In terms of assembly, hexamer of two different chains: An and B (A6, A5B, A4B2, A3B3, A2B4, AB5, B6). Interacts with PRUNE1. Component of the SET complex, composed of at least ANP32A, APEX1, HMGB2, NME1, SET and TREX1. Within this complex, interacts directly with SET. Also interacts with TREX1, but only following translocation to the nucleus. Requires Mg(2+) as cofactor. As to expression, isoform 1 is expressed in heart, brain, placenta, lung, liver, skeletal muscle, pancreas, spleen and thymus. Expressed in lung carcinoma cell lines but not in normal lung tissues. Isoform 2 is ubiquitously expressed and its expression is also related to tumor differentiation.

Its subcellular location is the cytoplasm. It is found in the nucleus. It catalyses the reaction a 2'-deoxyribonucleoside 5'-diphosphate + ATP = a 2'-deoxyribonucleoside 5'-triphosphate + ADP. The enzyme catalyses a ribonucleoside 5'-diphosphate + ATP = a ribonucleoside 5'-triphosphate + ADP. Autophosphorylation at His-118 increases serine/threonine protein kinase activity of the enzyme. Interaction with the SET complex inhibits the endonuclease activity. In terms of biological role, major role in the synthesis of nucleoside triphosphates other than ATP. The ATP gamma phosphate is transferred to the NDP beta phosphate via a ping-pong mechanism, using a phosphorylated active-site intermediate. Possesses nucleoside-diphosphate kinase, serine/threonine-specific protein kinase, geranyl and farnesyl pyrophosphate kinase, histidine protein kinase and 3'-5' exonuclease activities. Involved in cell proliferation, differentiation and development, signal transduction, G protein-coupled receptor endocytosis, and gene expression. Required for neural development including neural patterning and cell fate determination. During GZMA-mediated cell death, works in concert with TREX1. NME1 nicks one strand of DNA and TREX1 removes bases from the free 3' end to enhance DNA damage and prevent DNA end reannealing and rapid repair. This is Nucleoside diphosphate kinase A (NME1) from Homo sapiens (Human).